The chain runs to 557 residues: uncharacterized protein (557 aa).

The region spanning 7 to 206 is the DhaL domain; it reads SSFIDMLRLG…FACFLEGMLS (200 aa).

This is an uncharacterized protein from Mycoplasma genitalium (strain ATCC 33530 / DSM 19775 / NCTC 10195 / G37) (Mycoplasmoides genitalium).